The following is a 542-amino-acid chain: Phosphoacetylglucosamine mutase (542 aa).

Met1 is subject to N-acetylmethionine. Position 62 is a phosphothreonine (Thr62). Ser64 (phosphoserine intermediate) is an active-site residue. Mg(2+) contacts are provided by Ser64, Asp276, Asp278, and Asp280. Ser64 is modified (phosphoserine). Residues 370–372 (EAN), 496–500 (RPSGT), and Arg505 each bind substrate.

The protein belongs to the phosphohexose mutase family. It depends on Mg(2+) as a cofactor. Found in many tissues except lung. Relatively high expression in pancreas, heart, liver, and placenta, and relatively low expression in brain, skeletal muscle and kidney.

It carries out the reaction N-acetyl-alpha-D-glucosamine 1-phosphate = N-acetyl-D-glucosamine 6-phosphate. It functions in the pathway nucleotide-sugar biosynthesis; UDP-N-acetyl-alpha-D-glucosamine biosynthesis; N-acetyl-alpha-D-glucosamine 1-phosphate from alpha-D-glucosamine 6-phosphate (route I): step 2/2. Functionally, catalyzes the conversion of GlcNAc-6-P into GlcNAc-1-P during the synthesis of uridine diphosphate/UDP-GlcNAc, a sugar nucleotide critical to multiple glycosylation pathways including protein N- and O-glycosylation. The polypeptide is Phosphoacetylglucosamine mutase (Homo sapiens (Human)).